The primary structure comprises 141 residues: Lysozyme P (141 aa).

The first 18 residues, 1–18 (MKAFLVICALTLTAVATQ), serve as a signal peptide directing secretion. Positions 20–141 (RTMDRCSLAR…GSLPSINSCF (122 aa)) constitute a C-type lysozyme domain. Intrachain disulfides connect C25-C140, C46-C130, C81-C97, and C93-C111. Active-site residues include E51 and D69.

Belongs to the glycosyl hydrolase 22 family. Salivary gland.

The catalysed reaction is Hydrolysis of (1-&gt;4)-beta-linkages between N-acetylmuramic acid and N-acetyl-D-glucosamine residues in a peptidoglycan and between N-acetyl-D-glucosamine residues in chitodextrins.. Unlikely to play an active role in the humoral immune defense. May have a function in the digestion of bacteria in the food. This is Lysozyme P (LysP) from Drosophila melanogaster (Fruit fly).